Here is a 230-residue protein sequence, read N- to C-terminus: Urease accessory protein UreF (230 aa).

Belongs to the UreF family. In terms of assembly, ureD, UreF and UreG form a complex that acts as a GTP-hydrolysis-dependent molecular chaperone, activating the urease apoprotein by helping to assemble the nickel containing metallocenter of UreC. The UreE protein probably delivers the nickel.

The protein localises to the cytoplasm. In terms of biological role, required for maturation of urease via the functional incorporation of the urease nickel metallocenter. The sequence is that of Urease accessory protein UreF from Polynucleobacter asymbioticus (strain DSM 18221 / CIP 109841 / QLW-P1DMWA-1) (Polynucleobacter necessarius subsp. asymbioticus).